The primary structure comprises 359 residues: Spermine synthase (359 aa).

The PABS domain maps to 53 to 304 (SGWFSEPHPR…GVIGFVLCST (252 aa)). Residue Gln-99 coordinates S-adenosyl 3-(methylsulfanyl)propylamine. Tyr-129 lines the spermidine pocket. Gln-130 is an S-adenosyl 3-(methylsulfanyl)propylamine binding site. Asp-154 provides a ligand contact to spermidine. Residues Glu-174 and 205-206 (DA) each bind S-adenosyl 3-(methylsulfanyl)propylamine. The active-site Proton acceptor is Asp-224. Tyr-292 is a binding site for putrescine.

Belongs to the spermidine/spermine synthase family. Heterodimer. Component of a multiprotein complex. Interacts with SPDSYN1 and SPDSYN2. Expressed predominantly in stem internodes, flower buds and roots.

It carries out the reaction S-adenosyl 3-(methylsulfanyl)propylamine + spermidine = spermine + S-methyl-5'-thioadenosine + H(+). It functions in the pathway amine and polyamine biosynthesis; spermine biosynthesis; spermine from spermidine: step 1/1. The sequence is that of Spermine synthase (SPMS) from Arabidopsis thaliana (Mouse-ear cress).